The chain runs to 282 residues: Acyl-CoA-binding domain-containing protein 6 (282 aa).

Positions 1 to 31 (MASSFLPAGAITGDSGGELSSGDDSGEVEFP) are disordered. The ACB domain occupies 42-127 (LAELFEKAAA…VKKLDPGWNP (86 aa)). An acyl-CoA is bound by residues 69–73 (YARYK) and K95. The residue at position 106 (S106) is a Phosphoserine. An acyl-CoA is bound at residue Y114. ANK repeat units follow at residues 191-220 (EGRA…DINC) and 224-253 (EGQT…DPTL).

Monomer. Detected in placenta and spleen (at protein level). Detected in placenta, umbilical cord blood, CD34-positive hematopoietic progenitor cells and bone marrow.

The protein resides in the cytoplasm. Its subcellular location is the nucleus. Functionally, binds long-chain acyl-coenzyme A molecules with a strong preference for unsaturated C18:1-CoA, lower affinity for unsaturated C20:4-CoA, and very weak affinity for saturated C16:0-CoA. Does not bind fatty acids. Plays a role in protein N-myristoylation. The polypeptide is Acyl-CoA-binding domain-containing protein 6 (ACBD6) (Homo sapiens (Human)).